The following is a 311-amino-acid chain: DNA-directed RNA polymerase subunit alpha (311 aa).

The tract at residues 1-228 is alpha N-terminal domain (alpha-NTD); it reads MQYQIERIDH…ELFQPLATVT (228 aa). An alpha C-terminal domain (alpha-CTD) region spans residues 239 to 311; the sequence is PSPEAQIPLE…ISIPQSRTSV (73 aa).

It belongs to the RNA polymerase alpha chain family. In cyanobacteria the RNAP catalytic core is composed of 2 alpha, 1 beta, 1 beta', 1 gamma and 1 omega subunit. When a sigma factor is associated with the core the holoenzyme is formed, which can initiate transcription.

It carries out the reaction RNA(n) + a ribonucleoside 5'-triphosphate = RNA(n+1) + diphosphate. Functionally, DNA-dependent RNA polymerase catalyzes the transcription of DNA into RNA using the four ribonucleoside triphosphates as substrates. This chain is DNA-directed RNA polymerase subunit alpha, found in Prochlorococcus marinus (strain MIT 9312).